A 66-amino-acid chain; its full sequence is Cysteine proteinase inhibitor (66 aa).

The Secondary area of contact motif lies at 18-22 (QVVAG).

Belongs to the cystatin family. Phytocystatin subfamily. In tubers of untreated plants. After ABA treatment or mechanical wounding is mostly accumulated in leaves, to a lesser extent in stems, but not in roots.

The protein is Cysteine proteinase inhibitor (CYS-PIN) of Solanum tuberosum (Potato).